The primary structure comprises 447 residues: Pyruvate kinase (447 aa).

Arginine 33 serves as a coordination point for substrate. K(+)-binding residues include asparagine 35, serine 37, and aspartate 61. Asparagine 35 to histidine 38 is a binding site for ATP. Arginine 68 provides a ligand contact to ATP. A Mg(2+)-binding site is contributed by glutamate 203. Substrate-binding residues include glycine 226, aspartate 227, and threonine 259. Aspartate 227 provides a ligand contact to Mg(2+).

Belongs to the pyruvate kinase family. In terms of assembly, homotetramer. The cofactor is Mg(2+). K(+) serves as cofactor.

The catalysed reaction is pyruvate + ATP = phosphoenolpyruvate + ADP + H(+). It participates in carbohydrate degradation; glycolysis; pyruvate from D-glyceraldehyde 3-phosphate: step 5/5. This is Pyruvate kinase from Methanocaldococcus jannaschii (strain ATCC 43067 / DSM 2661 / JAL-1 / JCM 10045 / NBRC 100440) (Methanococcus jannaschii).